The chain runs to 57 residues: UPF0391 membrane protein RPA3505 (57 aa).

Transmembrane regions (helical) follow at residues 4–24 and 30–50; these read WVVTFLVVALIAGLLGFGGIA and IAKIIFFIAIVLFLVSAVISI.

Belongs to the UPF0391 family.

It localises to the cell membrane. This is UPF0391 membrane protein RPA3505 from Rhodopseudomonas palustris (strain ATCC BAA-98 / CGA009).